A 1184-amino-acid polypeptide reads, in one-letter code: PR domain zinc finger protein 10 (1184 aa).

The segment at 122 to 162 (LDAKEEEEEEEDEDEDTEEEEEEDAEDTDVDDWQPDPPRPF) is disordered. Residues 125-155 (KEEEEEEEDEDEDTEEEEEEDAEDTDVDDWQ) show a composition bias toward acidic residues. The 119-residue stretch at 202 to 320 (LPLVLYIDRF…PKQELKVWYA (119 aa)) folds into the SET domain. The tract at residues 221–325 (IPKRTQFGPV…KVWYAASYAE (105 aa)) is N-terminal PR domain; essential for transcriptional activator activity. The segment at 349-371 (WPCYECNRRFISSEQLQQHLNSH) adopts a C2H2-type 1 zinc-finger fold. Lysine 374 is covalently cross-linked (Glycyl lysine isopeptide (Lys-Gly) (interchain with G-Cter in SUMO2)). The span at 381-401 (TRGRGRGRGKRRFGPGRRPGR) shows a compositional bias: basic residues. Residues 381 to 405 (TRGRGRGRGKRRFGPGRRPGRPPKF) form a disordered region. Phosphoserine is present on serine 418. Residue threonine 422 is modified to Phosphothreonine. The interval 444 to 487 (GLDQPEQASIPIPQLPQETPPSLEQEPETHTLHLQPQQEESLVP) is disordered. Polar residues predominate over residues 475 to 487 (LHLQPQQEESLVP). 8 C2H2-type zinc fingers span residues 520 to 542 (FKCL…LRFH), 550 to 572 (LTCD…MKLH), 578 to 600 (YSCI…VAIH), 606 to 629 (FTCP…RSFH), 634 to 656 (YQCT…MLRH), 662 to 685 (FLCS…QRMH), 717 to 740 (FKCR…SKRH), and 850 to 873 (VCCP…RKKH). Positions 917–1164 (QAMTELSQTL…TGPSQQQTTQ (248 aa)) are C-terminal glutamine-rich region; essential for transcriptional activator activity. Residues 1004–1054 (EPAPAAPSASQVAGQPLSPSAQQVQQGLSPSHIQGSSSTQGQALQQQQNSS) form a disordered region. Positions 1014–1036 (QVAGQPLSPSAQQVQQGLSPSHI) are enriched in polar residues. Positions 1037–1054 (QGSSSTQGQALQQQQNSS) are enriched in low complexity.

Belongs to the class V-like SAM-binding methyltransferase superfamily. As to expression, present in brain, liver, kidney, spleen and thymus (at protein level).

It localises to the nucleus. Transcriptional activator, essential for early embryonic development and survival of embryonic stem cells (ESCs). Supports cell growth and survival during early development by transcriptionally activating the expression of the translation initiation factor EIF3B, to sustain global translation. Activates the transcription of FLNC. The chain is PR domain zinc finger protein 10 (Prdm10) from Mus musculus (Mouse).